The chain runs to 176 residues: Phosphopantetheine adenylyltransferase (176 aa).

A substrate-binding site is contributed by Thr11. Residues Thr11 to Phe12 and His19 each bind ATP. Substrate is bound by residues Lys43, Leu93, and Arg107. Residues Glu117 and Leu141–Ser147 each bind ATP.

The protein belongs to the bacterial CoaD family. In terms of assembly, homohexamer. Mg(2+) serves as cofactor.

The protein localises to the cytoplasm. The enzyme catalyses (R)-4'-phosphopantetheine + ATP + H(+) = 3'-dephospho-CoA + diphosphate. It functions in the pathway cofactor biosynthesis; coenzyme A biosynthesis; CoA from (R)-pantothenate: step 4/5. Functionally, reversibly transfers an adenylyl group from ATP to 4'-phosphopantetheine, yielding dephospho-CoA (dPCoA) and pyrophosphate. The sequence is that of Phosphopantetheine adenylyltransferase from Tropheryma whipplei (strain TW08/27) (Whipple's bacillus).